The following is a 97-amino-acid chain: Small ribosomal subunit protein bS20 (97 aa).

This sequence belongs to the bacterial ribosomal protein bS20 family.

In terms of biological role, binds directly to 16S ribosomal RNA. This is Small ribosomal subunit protein bS20 from Prochlorococcus marinus (strain MIT 9312).